The sequence spans 228 residues: 7-cyano-7-deazaguanine synthase (228 aa).

Residue 8–18 (LSGGLDSTTCL) participates in ATP binding. Residues Cys188, Cys198, Cys201, and Cys204 each coordinate Zn(2+).

It belongs to the QueC family. The cofactor is Zn(2+).

It carries out the reaction 7-carboxy-7-deazaguanine + NH4(+) + ATP = 7-cyano-7-deazaguanine + ADP + phosphate + H2O + H(+). Its pathway is purine metabolism; 7-cyano-7-deazaguanine biosynthesis. Its function is as follows. Catalyzes the ATP-dependent conversion of 7-carboxy-7-deazaguanine (CDG) to 7-cyano-7-deazaguanine (preQ(0)). This chain is 7-cyano-7-deazaguanine synthase, found in Legionella pneumophila (strain Paris).